An 864-amino-acid chain; its full sequence is DNA double-strand break repair Rad50 ATPase (864 aa).

ATP contacts are provided by residues 32–38 (NGAGKSS) and glutamine 131. 2 coiled-coil regions span residues 176 to 319 (RELD…EKAI) and 376 to 413 (DIDKVNSLEQKVEETRKKQLNLRAQLAKVESLISEKNE). Residues 380-478 (VNSLEQKVEE…ELNKIEREYR (99 aa)) form the Zinc-hook domain. Zn(2+) is bound by residues cysteine 426 and cysteine 429. A coiled-coil region spans residues 440 to 697 (KIIKEAKSYI…DREKIINAIN (258 aa)).

It belongs to the SMC family. RAD50 subfamily. Homodimer. Forms a heterotetramer composed of two Mre11 subunits and two Rad50 subunits. The cofactor is Zn(2+).

In terms of biological role, part of the Rad50/Mre11 complex, which is involved in the early steps of DNA double-strand break (DSB) repair. The complex may facilitate opening of the processed DNA ends to aid in the recruitment of HerA and NurA. Rad50 controls the balance between DNA end bridging and DNA resection via ATP-dependent structural rearrangements of the Rad50/Mre11 complex. This chain is DNA double-strand break repair Rad50 ATPase, found in Saccharolobus solfataricus (strain ATCC 35092 / DSM 1617 / JCM 11322 / P2) (Sulfolobus solfataricus).